A 337-amino-acid polypeptide reads, in one-letter code: MSGSPVKRQRMESALDQLKQFTTVVADTGDFNAIDEYKPQDATTNPSLILAAAQMPAYQELVEEAIAYGKKLGGPQEEQIKNAIDKLFVLFGAEILKKIPGRVSTEVDARLSFDKDAMVARAKRLIELYKEAGISKDRILIKLSSTWEGIQAGKELEEQHGIHCNMTLLFSFAQAVACAEAGVTLISPFVGRILDWHVANTDKKSYEPQEDPGVKSVTKIYNYYKKFGYKTIVMGASFRNTGEIKALAGCDFLTISPKLLGELLKDNTKLAPVLSIKAAQTSDLGKIHLDEKAFRWLHSEDQMAVEKLSDGIRKFAADAIKLERMLTERMFSAENGK.

Residues 1–10 (MSGSPVKRQR) carry the Nuclear localization signal motif. N6-acetyllysine is present on lysine 115. Lysine 142 functions as the Schiff-base intermediate with substrate in the catalytic mechanism. An N6-acetyllysine modification is found at lysine 219. Serine 237 and serine 256 each carry phosphoserine. N6-acetyllysine occurs at positions 269, 286, and 321.

This sequence belongs to the transaldolase family. Type 1 subfamily. As to quaternary structure, homodimer. Interacts with KPNA1 and KPNA4.

The protein resides in the nucleus. Its subcellular location is the cytoplasm. The catalysed reaction is D-sedoheptulose 7-phosphate + D-glyceraldehyde 3-phosphate = D-erythrose 4-phosphate + beta-D-fructose 6-phosphate. Its pathway is carbohydrate degradation; pentose phosphate pathway; D-glyceraldehyde 3-phosphate and beta-D-fructose 6-phosphate from D-ribose 5-phosphate and D-xylulose 5-phosphate (non-oxidative stage): step 2/3. In terms of biological role, catalyzes the rate-limiting step of the non-oxidative phase in the pentose phosphate pathway. Catalyzes the reversible conversion of sedheptulose-7-phosphate and D-glyceraldehyde 3-phosphate into erythrose-4-phosphate and beta-D-fructose 6-phosphate. This chain is Transaldolase (TALDO1), found in Cricetulus griseus (Chinese hamster).